The following is a 430-amino-acid chain: UDP-N-acetylglucosamine 1-carboxyvinyltransferase 1 (430 aa).

A phosphoenolpyruvate-binding site is contributed by 22–23 (KN). UDP-N-acetyl-alpha-D-glucosamine is bound at residue R93. C117 functions as the Proton donor in the catalytic mechanism. The residue at position 117 (C117) is a 2-(S-cysteinyl)pyruvic acid O-phosphothioketal. Residues 122–126 (RPVDL), D305, and V327 contribute to the UDP-N-acetyl-alpha-D-glucosamine site.

Belongs to the EPSP synthase family. MurA subfamily.

It is found in the cytoplasm. The enzyme catalyses phosphoenolpyruvate + UDP-N-acetyl-alpha-D-glucosamine = UDP-N-acetyl-3-O-(1-carboxyvinyl)-alpha-D-glucosamine + phosphate. Its pathway is cell wall biogenesis; peptidoglycan biosynthesis. Its function is as follows. Cell wall formation. Adds enolpyruvyl to UDP-N-acetylglucosamine. In Listeria monocytogenes serotype 4b (strain F2365), this protein is UDP-N-acetylglucosamine 1-carboxyvinyltransferase 1.